A 1671-amino-acid chain; its full sequence is MEEKRIADYFVVAGMPENPQLLQENSFNDSGRLRAATTIEPITDIGVYFPLLGEEVPEGYEILSHTPTGLQANLNHGSVRTTDCYIYFRRGKDRPPLVDIGVLYDGHERIMSDAEIVAETPGGRVANVNNSSAKTFLTYRRARADMPCNELVVTELCVIVQSKGERAPHAFCLIYKTLNKGYVGSDVYLCYKKSMYRPKHISYKPEILLRYPTFDHTDFPLNLCPSVPLFCLPMGASLEAWPHVNGTEKRKPISPVFSTFVLTVSDGTYKVYGSALTFYEDYDESKLSAEQKELLGWDEEFGAQHSLHMIKAICLLSHHPFGDTFDKWLKYLHRMVLYDVNIPIPVERYITQLLDEVPFPAPSIHLQLSSESNDRILLTQPEDSPLPRSGAGFHILLQNLGTDNCLHVLLLALTEQKILIHSLRPATLTAVAEAIVSLLFPFKWQCPYIPLCPLGLAEVLHAPLPYLIGVDSRFFDLYEPPTDVTCIDLDTNNISLCESQRHLSPKLLPKRAARLLRQTLTELENAKPISYDSTNSLDRDIRKRKRELVLEQRIQEAFLLFMASILRGYRDFLVPISKAPSVGATDPSALFQLKAFLRSRDKSHQKFFELMMKTQMFIRFIEERSFVSDGDHGLSFFDECAEKVGNYDETPAQLHLVDWDTGQNSERTKYIFPPDSVTPAGSQPGGGGGGLAYNYENFTLQPELLQSTKKTALSKFLQLQLNASLSPGSPIARRTKHEIKLSQKMASRCQQHPEAWSKYLLATCYSLYFLILPSMVLDPRHAGKEPEILRAAYDVLVRASRLKITCDEFCYRIMMQLCGIHNLPVLAVRLHYLMKRSGVQANALTYGFYNRCVLESQWPQDSTTISQIRWNRIKNVVLGAAQFRKAGKQRAASKVNKSLSASQDQNLSTLETVDGQSRTSLASSSGDGGGHGLLDFAAFDRLRNKLGSIVRQTVTGGNNETMGDAVNNTGLLIPGELSAPNTPTYGGDTEILAKALQQQQPRKQIMSIGGGDDDDEDEDEDEYTAGSPSTPQKQLEAGADDLEYAGGGDYEADEEDEDEVDEHVAAQRARQRVQSPTKISPRTPVTQNDPLGALNEEESAASATPTQETQQEQQHSQSQIDSSIYSDKPILFRGQRSATFDESTQIGKSMHRSETMPVASSGVTNSLANIGSSLKFTFGRYSPARLSLKKDLKLPANIIENISSISPSLTGKKSNELIQGSLSSIKSAANSLTKKFDEIKGVISANSTPTKTNNGHHPHGLHHGHHHPHHHHHHHSQHGNAEQEEHDAAVHEEGKLRRVSSDLDPWGRLSESRKSSYNNLVPLGENSSTGALHMHAFPAVPDNLYSLTSENAADRDCDVLIQLTTCSQCHNCSVLVYDEEIMSGWTAEDSNLNTTCHACNKLTVPFLSVQIERQVEESEQSDPLQDGKEQIANGNSHKTSLTVPYLNPLVLRKELENILTQEGDIALIKPEFVDEHPIIYWNLLWLMERIESKTHLPELCLPVPSDKEHIDPLSKVKTVHIQCLWDNLSLHTEASGPPMYLLYRETQPTSPLIKALLTDQAQLNKNVIQQIISAIRCNDFATPLKRLANERHKLKSNGVERSHSFYRDILFLALTAIGRSNVDLATFHREYAAVFDKLTERECNMYYRNQDLPPSASTIFCRAYFRPLLLP.

Residues 39–195 form the MABP domain; sequence IEPITDIGVY…DVYLCYKKSM (157 aa). The 178-residue stretch at 187–364 folds into the uDENN domain; the sequence is VYLCYKKSMY…DEVPFPAPSI (178 aa). The region spanning 385–521 is the cDENN domain; that stretch reads PLPRSGAGFH…AARLLRQTLT (137 aa). A dDENN domain is found at 523-632; sequence LENAKPISYD…ERSFVSDGDH (110 aa). 3 disordered regions span residues 997–1160, 1245–1311, and 1415–1435; these read QQQQ…PVAS, ANST…RLSE, and VEES…ANGN. Acidic residues-rich tracts occupy residues 1011–1023 and 1050–1061; these read GDDD…EDEY and YEADEEDEDEVD. A compositionally biased stretch (polar residues) spans 1072–1089; the sequence is RVQSPTKISPRTPVTQND. Residues 1100–1119 are compositionally biased toward low complexity; the sequence is AASATPTQETQQEQQHSQSQ. Positions 1136-1147 are enriched in polar residues; that stretch reads RSATFDESTQIG. The segment covering 1254 to 1277 has biased composition (basic residues); sequence NGHHPHGLHHGHHHPHHHHHHHSQ. Positions 1281-1301 are enriched in basic and acidic residues; the sequence is AEQEEHDAAVHEEGKLRRVSS.

Interacts with Cam. Interacts with Rab10. Interacts (via the DENN domains) with Rab11. In terms of tissue distribution, expressed in the adult head and body.

Its subcellular location is the cytoplasm. The protein resides in the cell cortex. The protein localises to the early endosome. It is found in the recycling endosome. It localises to the cytoplasmic granule. In terms of biological role, calmodulin-binding protein that acts as a guanine exchange factor for Rab10 and Rab11. Essential for maintenance of adult photoreceptor cells. Upon light stimulation, required for trafficking of newly synthesized ninaE (Rh1) from the trans-Golgi network to rhabdomere membranes via Rab11-dependent vesicular transport. During egg development, essential for establishing and maintaining epithelial cell polarity by regulating the correct polarized deposition of basal membrane (BM) proteins in follicular epithelial (FE) cells. Functions by targeting Rab10 to the basal cytoplasm, where it restricts the secretion of BM proteins such as trol/Pcan and vkg/Coll IV to the basal surface. Appears to be involved in regulating the levels and distribution of the guanine nucleotide exchange factor strat, however the two proteins appear to have independent roles in regulating polarized BM protein secretion in the FE. In Drosophila melanogaster (Fruit fly), this protein is DENN domain-containing protein Crag.